The primary structure comprises 267 residues: MFSTGTVWKNVAAVRQRAPIIHSITNFVVMNTTANALLAAGASPIMAHAPEEMAEMAGIASALVLNIGTLTKPWVESMMLAGMAARERRLPVVLDPVGAGASSLRTTTALEILEKVRPAVVRGNGSEILALAGAAGDTRGVDSARTAHEAVDGGRALARRYGAVVVVSGAEDVVTDGDALWLVRGGSPLMPRVTGMGCTATVLVAAHVAVAADVLEGAVTGMAAMSAAGALAARRSQGPGSFQVAFLDVLHSLDLVTVRDEVEVVRA.

Methionine 46 provides a ligand contact to substrate. ATP contacts are provided by arginine 122 and serine 168. Glycine 195 contributes to the substrate binding site.

It belongs to the Thz kinase family. The cofactor is Mg(2+).

It carries out the reaction 5-(2-hydroxyethyl)-4-methylthiazole + ATP = 4-methyl-5-(2-phosphooxyethyl)-thiazole + ADP + H(+). It functions in the pathway cofactor biosynthesis; thiamine diphosphate biosynthesis; 4-methyl-5-(2-phosphoethyl)-thiazole from 5-(2-hydroxyethyl)-4-methylthiazole: step 1/1. Its function is as follows. Catalyzes the phosphorylation of the hydroxyl group of 4-methyl-5-beta-hydroxyethylthiazole (THZ). The protein is Hydroxyethylthiazole kinase of Nitratidesulfovibrio vulgaris (strain ATCC 29579 / DSM 644 / CCUG 34227 / NCIMB 8303 / VKM B-1760 / Hildenborough) (Desulfovibrio vulgaris).